A 423-amino-acid polypeptide reads, in one-letter code: Ribosome biogenesis protein WDR12 homolog (423 aa).

The ubiquitin-like (UBL) domain stretch occupies residues 10 to 93; that stretch reads VQVHLKTKQE…EDAIEIEYVE (84 aa). 7 WD repeats span residues 105-142, 144-186, 193-232, 253-291, 293-332, 338-378, and 382-420; these read LHDD…ILTI, GHTA…NAVE, GHER…AGGD, GHRE…IKTE, STNK…GSIV, GHNA…APLY, and GHGE…VETM.

This sequence belongs to the WD repeat WDR12/YTM1 family.

Its subcellular location is the nucleus. It is found in the nucleolus. The protein resides in the nucleoplasm. Required for maturation of ribosomal RNAs and formation of the large ribosomal subunit. This Drosophila willistoni (Fruit fly) protein is Ribosome biogenesis protein WDR12 homolog.